A 370-amino-acid polypeptide reads, in one-letter code: Probable trehalose-phosphate phosphatase J (370 aa).

It belongs to the trehalose phosphatase family. A divalent metal cation is required as a cofactor.

It carries out the reaction alpha,alpha-trehalose 6-phosphate + H2O = alpha,alpha-trehalose + phosphate. It participates in glycan biosynthesis; trehalose biosynthesis. In terms of biological role, removes the phosphate from trehalose 6-phosphate to produce free trehalose. Trehalose accumulation in plant may improve abiotic stress tolerance. The sequence is that of Probable trehalose-phosphate phosphatase J (TPPJ) from Arabidopsis thaliana (Mouse-ear cress).